An 845-amino-acid polypeptide reads, in one-letter code: MFGLSKVLRVGEGRAVKRLHKIADQVIALEDKFANLTDEELKAKTAEFKERIAGGEGLDEIFLEAFATAREAAWRVLGQKHYHVQIMGGAALHFGNVAEMRTGEGKTLTCVLPAYLNALEGKGVHVVTVNDYLAKRDAEMMGRVHRYLGLEVGVILSDMRPDERREAYAADITYGTNNELGFDYLRDNMARSLSDLVQRGHNYAIVDEVDSILIDEARTPLIISGPVDGTSQFYNVFAQIVPRMTKDVHYEVDERKKTVGVKEEGVEYVEDQLGIDNLYAPEHSQLVSYLNNAIKAQELFTRDKDYIVRNGEVMIVDGFTGRVLAGRRYNEGMHQAIEAKERVEIKNENQTLATVTLQNYFRLYTKLAGMTGTAETEAAELNQIYKLDVIAIPTNRPNQREDLTDLVYKTQEAKFAAVVDDIAERTEKGQPVLVGTVSVERSEYLSQLLTKRGIKHNVLNAKHHEQEAQIVAQAGLPGAVTVATNMAGRGTDIVLGGNPEILLDIKLRERGLDPFEDEESYQEAWDAELPAMKQRCEERGDKVREAGGLYVLGTERHESRRIDNQLRGRSARQGDPGSTRFYLSMRDDLMVRFVGPTMENMMNRLNVPDDVPIESKTVTNSIKGAQAQVENQNFEMRKNVLKYDEVMNEQRKVIYSERREILESADISRYIQNMIEETVSAYVDGATANGYVEDWDLDKLWNALEALYDPSINWTDLVEGSEYGKPGELSAEDLRTALVNDAHAEYAKLEEAVSAIGGEAQIRNIERMVLMPVIDTKWREHLYEMDYLKEGIGLRAMAQRDPLVEYQKEGGDMFNGMKDGIKEETVRQLFLLRKQFIKQDAEVAD.

ATP-binding positions include Q85, 103–107 (GEGKT), and D492.

It belongs to the SecA family. Monomer and homodimer. Part of the essential Sec protein translocation apparatus which comprises SecA, SecYEG and auxiliary proteins SecDF. Other proteins may also be involved.

It localises to the cell membrane. It is found in the cytoplasm. The catalysed reaction is ATP + H2O + cellular proteinSide 1 = ADP + phosphate + cellular proteinSide 2.. Its function is as follows. Part of the Sec protein translocase complex. Interacts with the SecYEG preprotein conducting channel. Has a central role in coupling the hydrolysis of ATP to the transfer of proteins into and across the cell membrane, serving as an ATP-driven molecular motor driving the stepwise translocation of polypeptide chains across the membrane. The sequence is that of Protein translocase subunit SecA 1 from Corynebacterium glutamicum (strain ATCC 13032 / DSM 20300 / JCM 1318 / BCRC 11384 / CCUG 27702 / LMG 3730 / NBRC 12168 / NCIMB 10025 / NRRL B-2784 / 534).